A 375-amino-acid chain; its full sequence is ELAV-like protein 2 (375 aa).

RRM domains are found at residues 67-145 (TNLI…YARP), 153-233 (ANLY…FANN), and 292-370 (WCIF…FKTS).

It belongs to the RRM elav family. As to quaternary structure, part of a ribonucleoprotein (RNP) complex, at least composed of elavl1/elrA and/or elavl2/elrB, igf2bp3/vg1RBP, ddx6/Xp54, ybx2/frgy2, lsm14b/rap55b and, in a subset of RNP complexes, stau1/staufen. Binds RNA as a homooligomer.

It localises to the cytoplasm. Its subcellular location is the cell cortex. Binds to poly-U elements and AU-rich elements (AREs) in the 3'-UTR of target mRNAs. Required for the vegetal localization of vg1 mRNA. Probably required for nervous system development. The sequence is that of ELAV-like protein 2 from Xenopus tropicalis (Western clawed frog).